We begin with the raw amino-acid sequence, 336 residues long: 3-isopropylmalate dehydrogenase (336 aa).

The substrate site is built by R87, R97, R121, and D211. Residues D211, D235, and D239 each contribute to the Mg(2+) site. 271-283 (GSAPDIAGQGVAD) provides a ligand contact to NAD(+).

The protein belongs to the isocitrate and isopropylmalate dehydrogenases family. LeuB type 2 subfamily. Homodimer. The cofactor is Mg(2+). It depends on Mn(2+) as a cofactor.

It is found in the cytoplasm. The catalysed reaction is (2R,3S)-3-isopropylmalate + NAD(+) = 4-methyl-2-oxopentanoate + CO2 + NADH. Its pathway is amino-acid biosynthesis; L-leucine biosynthesis; L-leucine from 3-methyl-2-oxobutanoate: step 3/4. Catalyzes the oxidation of 3-carboxy-2-hydroxy-4-methylpentanoate (3-isopropylmalate) to 3-carboxy-4-methyl-2-oxopentanoate. The product decarboxylates to 4-methyl-2 oxopentanoate. The sequence is that of 3-isopropylmalate dehydrogenase from Mycobacterium avium (strain 104).